Reading from the N-terminus, the 215-residue chain is GTP-binding nuclear protein ran-1 (215 aa).

The region spanning 6 to 170 is the Small GTPase Ran-type domain; it reads GIPTFKLVLV…LWLARKLLGD (165 aa). A GTP-binding site is contributed by 17-24; it reads DGGTGKTT. A switch-I region spans residues 36–44; the sequence is KKYVATLGV. Residues G67, 121-124, and 149-151 each bind GTP; these read NKVD and SAK. The segment at 67-83 is switch-II; that stretch reads GQEKFGGLRDGYYIQGQ.

It belongs to the small GTPase superfamily. Ran family. In terms of assembly, found in a nuclear export complex with RanGTP, exportin and pre-miRNA.

It is found in the nucleus. The protein resides in the chromosome. The protein localises to the centromere. Its subcellular location is the kinetochore. Its function is as follows. Ran GTPase system comprises ran-1, ran-2 and ran-3 and is essential in nucleocytoplasmic transport. Ran-1 is a GTP-binding protein that mediates the interaction between mitotic chromosomes and kinetochore microtubules. Plays a crucial role in nuclear envelope assembly at the end of each cell division. Required for the import of protein into the nucleus and also for RNA export. RCC1 (ran-3)/Ran (ran-1) complex (together with other proteins) acts as a component of a signal transmission pathway that detects unreplicated DNA. This Caenorhabditis elegans protein is GTP-binding nuclear protein ran-1 (ran-1).